Consider the following 338-residue polypeptide: NADPH dehydrogenase (338 aa).

22–25 (SPMC) contacts FMN. Substrate is bound at residue Y27. FMN is bound by residues A59 and Q101. 163–166 (HAAH) is a binding site for substrate. Residues R214 and 306 to 307 (GR) each bind FMN.

It belongs to the NADH:flavin oxidoreductase/NADH oxidase family. NamA subfamily. In terms of assembly, homotetramer. Requires FMN as cofactor.

The enzyme catalyses A + NADPH + H(+) = AH2 + NADP(+). Functionally, catalyzes the reduction of the double bond of an array of alpha,beta-unsaturated aldehydes and ketones. It also reduces the nitro group of nitroester and nitroaromatic compounds. It could have a role in detoxification processes. The polypeptide is NADPH dehydrogenase (Listeria welshimeri serovar 6b (strain ATCC 35897 / DSM 20650 / CCUG 15529 / CIP 8149 / NCTC 11857 / SLCC 5334 / V8)).